Reading from the N-terminus, the 944-residue chain is ATP-dependent RNA helicase DDX42 (944 aa).

A compositionally biased stretch (gly residues) spans 1–18 (MNWNKGGPGTKRGFGFGG). 3 disordered regions span residues 1-119 (MNWN…LEAF), 131-155 (MKRLEDKDKEKKNAKGIRDDIEEED), and 182-203 (EYDSDGNPIAPSKKIIDPLPPI). A compositionally biased stretch (low complexity) spans 35–52 (SHSAFGTAGSSAAFAKSG). The segment covering 70–84 (DEENAYFEDEEEDNS) has biased composition (acidic residues). Residues 120-157 (MAEVEDQAARDMKRLEDKDKEKKNAKGIRDDIEEEDDQ) adopt a coiled-coil conformation. Residues 131–149 (MKRLEDKDKEKKNAKGIRD) show a composition bias toward basic and acidic residues. Positions 253-281 (SSFARFGFDEQLMHQIRKSEYTQPTPIQC) match the Q motif motif. The 176-residue stretch at 284–459 (VPVAMSGRDM…RDILIDPIRV (176 aa)) folds into the Helicase ATP-binding domain. 297 to 304 (AKTGSGKT) serves as a coordination point for ATP. The DEAD box motif lies at 407–410 (DEAD). The Helicase C-terminal domain maps to 487–632 (WLTRRLVEFT…HVSKELLDLA (146 aa)). 3 disordered regions span residues 642 to 682 (RFKG…VMSN), 723 to 753 (GSSAAGASGWTSAGSLNSVPTSSAQQNAANP), and 794 to 944 (SANA…RWDS). Residues 723–737 (GSSAAGASGWTSAGS) show a composition bias toward low complexity. A compositionally biased stretch (polar residues) spans 738–752 (LNSVPTSSAQQNAAN). The segment covering 794-814 (SANASAGNREGVGSAGSAPRG) has biased composition (low complexity). Gly residues predominate over residues 815–824 (GSSGGGGGGI). Basic and acidic residues-rich tracts occupy residues 825–887 (VRER…RHFT) and 901–926 (NISEGRSNESRNGENRKDANSRDNKT).

The protein belongs to the DEAD box helicase family. DDX42 subfamily. Transient component of the SF3B subcomplex of the 17S U2 SnRNP complex.

It localises to the cytoplasm. The protein resides in the nucleus. The enzyme catalyses ATP + H2O = ADP + phosphate + H(+). ATP-dependent RNA helicase that binds to partially double-stranded RNAs (dsRNAs) in order to unwind RNA secondary structures. Unwinding is promoted in the presence of single-strand binding proteins. Also mediates RNA duplex formation thereby displacing the single-strand RNA binding protein. ATP and ADP modulate its activity: ATP binding and hydrolysis by DDX42 triggers RNA strand separation, whereas the ADP-bound form of the protein triggers annealing of complementary RNA strands. Required for assembly of the 17S U2 SnRNP complex of the spliceosome, a large ribonucleoprotein complex that removes introns from transcribed pre-mRNAs: DDX42 associates transiently with the SF3B subcomplex of the 17S U2 SnRNP complex and is released after fulfilling its role in the assembly of 17S U2 SnRNP. In Gallus gallus (Chicken), this protein is ATP-dependent RNA helicase DDX42 (DDX42).